We begin with the raw amino-acid sequence, 191 residues long: Ribonuclease HII (191 aa).

Positions 7 to 191 (ILMAGVDEVG…YSPVADLISK (185 aa)) constitute an RNase H type-2 domain. A divalent metal cation-binding residues include D13, E14, and D103.

It belongs to the RNase HII family. Mn(2+) serves as cofactor. Requires Mg(2+) as cofactor.

The protein resides in the cytoplasm. It carries out the reaction Endonucleolytic cleavage to 5'-phosphomonoester.. Its function is as follows. Endonuclease that specifically degrades the RNA of RNA-DNA hybrids. The sequence is that of Ribonuclease HII from Legionella pneumophila (strain Paris).